Here is a 354-residue protein sequence, read N- to C-terminus: 3-dehydroquinate synthase (354 aa).

NAD(+)-binding positions include 100–104, 124–125, Lys136, Lys145, and 163–166; these read GATGD, TT, and FLKT. Zn(2+) is bound by residues Glu178, His242, and His256.

Belongs to the sugar phosphate cyclases superfamily. Dehydroquinate synthase family. NAD(+) serves as cofactor. The cofactor is Co(2+). It depends on Zn(2+) as a cofactor.

The protein localises to the cytoplasm. The enzyme catalyses 7-phospho-2-dehydro-3-deoxy-D-arabino-heptonate = 3-dehydroquinate + phosphate. Its pathway is metabolic intermediate biosynthesis; chorismate biosynthesis; chorismate from D-erythrose 4-phosphate and phosphoenolpyruvate: step 2/7. Functionally, catalyzes the conversion of 3-deoxy-D-arabino-heptulosonate 7-phosphate (DAHP) to dehydroquinate (DHQ). This Staphylococcus aureus (strain COL) protein is 3-dehydroquinate synthase.